A 642-amino-acid polypeptide reads, in one-letter code: Threonine--tRNA ligase (642 aa).

Positions 1-61 (MPVITLPDGS…ETDAELSIIT (61 aa)) constitute a TGS domain. The interval 243–534 (DHRKIGKQLD…LIEEYAGRFP (292 aa)) is catalytic. 3 residues coordinate Zn(2+): cysteine 334, histidine 385, and histidine 511.

It belongs to the class-II aminoacyl-tRNA synthetase family. In terms of assembly, homodimer. The cofactor is Zn(2+).

The protein localises to the cytoplasm. The catalysed reaction is tRNA(Thr) + L-threonine + ATP = L-threonyl-tRNA(Thr) + AMP + diphosphate + H(+). Its function is as follows. Catalyzes the attachment of threonine to tRNA(Thr) in a two-step reaction: L-threonine is first activated by ATP to form Thr-AMP and then transferred to the acceptor end of tRNA(Thr). Also edits incorrectly charged L-seryl-tRNA(Thr). The polypeptide is Threonine--tRNA ligase (Shewanella baltica (strain OS195)).